A 451-amino-acid polypeptide reads, in one-letter code: MSAVALPRVSGGHDEHGHLEEFRTDPIGLMQRVRDECGDVGTFQLAGKQVVLLSGSHANEFFFRAGDDDLDQAKAYPFMTPIFGEGVVFDASPERRKEMLHNAALRGEQMKGHAATIEDQVRRMIADWGEAGEIDLLDFFAELTIYTSSACLIGKKFRDQLDGRFAKLYHELERGTDPLAYVDPYLPIESFRRRDEARNGLVALVADIMNGRIANPPTDKSDRDMLDVLIAVKAETGTPRFSADEITGMFISMMFAGHHTSSGTASWTLIELMRHRDAYAAVIDELDELYGDGRSVSFHALRQIPQLENVLKETLRLHPPLIILMRVAKGEFEVQGHRIHEGDLVAASPAISNRIPEDFPDPHDFVPARYEQPRQEDLLNRWTWIPFGAGRHRCVGAAFAIMQIKAIFSVLLREYEFEMAQPPESYRNDHSKMVVQLAQPACVRYRRRTGV.

Positions 72, 76, 97, 326, 392, and 394 each coordinate heme b.

Belongs to the cytochrome P450 family. As to quaternary structure, homodimer. Heme b is required as a cofactor.

It localises to the cytoplasm. The catalysed reaction is a 14alpha-methyl steroid + 6 reduced [2Fe-2S]-[ferredoxin] + 3 O2 + 5 H(+) = a Delta(14) steroid + formate + 6 oxidized [2Fe-2S]-[ferredoxin] + 4 H2O. With respect to regulation, inhibited by alpha-ethyl-N-4-pyridinyl-benzeneacetamide (EPBA) and 4,4'-dihydroxybenzophenone (DHBP). Functionally, sterol 14alpha-demethylase whose physiological substrate is not known. Accepts electrons from the iron-sulfur ferredoxin Fdx encoded by an adjacent gene. In vitro, catalyzes C14-demethylation of lanosterol, 24,25-dihydrolanosterol and obtusifoliol, to produce the 8,14-dienes stereoselectively. This is Sterol 14alpha-demethylase (cyp51) from Mycobacterium tuberculosis (strain ATCC 25618 / H37Rv).